The following is a 191-amino-acid chain: Ion-translocating oxidoreductase complex subunit B (191 aa).

Residues 1–26 are hydrophobic; the sequence is MSLVLVAVLALLGLCLIAGAILGFAA. A 4Fe-4S domain is found at 32-90; it reads EGDPIAEQINALLPQTQCGQCGYPGCKPYAEAIAGGDKINKCPPGGEATIQALADLLDV. Positions 49, 52, 57, 73, 114, 117, 120, 124, 144, 147, 150, and 154 each coordinate [4Fe-4S] cluster. 4Fe-4S ferredoxin-type domains follow at residues 105–134 and 135–164; these read MVAF…GAAR and QMHT…MIEV.

The protein belongs to the 4Fe4S bacterial-type ferredoxin family. RnfB subfamily. In terms of assembly, the complex is composed of six subunits: RnfA, RnfB, RnfC, RnfD, RnfE and RnfG. The cofactor is [4Fe-4S] cluster.

It localises to the cell inner membrane. Functionally, part of a membrane-bound complex that couples electron transfer with translocation of ions across the membrane. The protein is Ion-translocating oxidoreductase complex subunit B of Ectopseudomonas mendocina (strain ymp) (Pseudomonas mendocina).